The sequence spans 110 residues: UPF0060 membrane protein Mmwyl1_1139 (110 aa).

4 consecutive transmembrane segments (helical) span residues 7-27, 33-53, 63-83, and 87-107; these read ISLFMLTALAEIIGCYLPYLW, TIWLLVPAALSLAVFTWLLTL, AAYGGVYIFMAVLWLWIVDGI, and TWDMIGSAVALLGMAIIMFAP.

The protein belongs to the UPF0060 family.

Its subcellular location is the cell inner membrane. This Marinomonas sp. (strain MWYL1) protein is UPF0060 membrane protein Mmwyl1_1139.